Here is a 747-residue protein sequence, read N- to C-terminus: Homeobox-leucine zipper protein GLABRA 2 (747 aa).

A disordered region spans residues 31–112; the sequence is RNASSGSTNP…KKYHRHTTDQ (82 aa). A compositionally biased stretch (polar residues) spans 58–68; sequence EMSSENSGPTR. The span at 73-90 shows a compositional bias: acidic residues; that stretch reads EDLEGEDHDDEEEEEEDG. Positions 97-107 are enriched in basic residues; that stretch reads TNKRKRKKYHR. The homeobox DNA-binding region spans 101-160; it reads KRKKYHRHTTDQIRHMEALFKETPHPDEKQRQQLSKQLGLAPRQVKFWFQNRRTQIKAIQ. Positions 155–223 form a coiled coil; it reads QIKAIQERHE…LDKLRAALGR (69 aa). The region spanning 250 to 489 is the START domain; sequence FALEKSRIAE…LQLHCERLVF (240 aa).

It belongs to the HD-ZIP homeobox family. Class IV subfamily. As to quaternary structure, interacts with GIR1 and GIR2. In terms of tissue distribution, expressed in individual developing trichome cells of the emerging leaf primordia. Expressed in differentiating hairless cells of root epidermis.

It is found in the nucleus. Its function is as follows. Transcription factor involved in the determination of epidermal cell identity. Required for correct morphological development and maturation of trichomes. Regulates the frequency of trichome initiation and determines trichome spacing. Acts as a negative factor for root hair development. Required for ectopic repression of root hair development in a subset of epidermal cells. May suppress hair formation in root epidermis by promoting differentiation into hairless epidermal cells. Directly suppresses the bHLH transcription factor genes, RHD6, RSL1, RSL2, LRL1, and LRL2, which have diverse functions in root hair development. Required for normal development of seed coat mucilage. Involved in the control of seed oil accumulation. Acts as a negative regulator of anthocyanin biosynthesis. May directly repress the expression of some component genes from the MYB-bHLH-WD40 (MBW) transcriptional activator complex. The MBW complex activates the transcription of late biosynthesis genes in the flavonoid pathway, leading to the production of anthocyanins. This Arabidopsis thaliana (Mouse-ear cress) protein is Homeobox-leucine zipper protein GLABRA 2.